We begin with the raw amino-acid sequence, 827 residues long: Polyhomeotic-like protein 2 (827 aa).

Disordered stretches follow at residues methionine 1 to glutamine 78, glycine 282 to threonine 316, and glutamine 482 to alanine 545. Residues serine 9–serine 38 show a composition bias toward low complexity. The span at threonine 485 to valine 498 shows a compositional bias: basic and acidic residues. A compositionally biased stretch (polar residues) spans alanine 517–glutamate 538. Residues lysine 540–valine 570 carry the HD1 motif. The segment at asparagine 609–lysine 643 adopts an FCS-type zinc-finger fold. Cysteine 618, cysteine 621, cysteine 637, and cysteine 641 together coordinate Zn(2+). The tract at residues methionine 653–serine 730 is disordered. Residues serine 661 to proline 675 are compositionally biased toward basic and acidic residues. Polar residues-rich tracts occupy residues proline 687–serine 696 and glycine 708–serine 717. An SAM domain is found at tryptophan 763–serine 827.

Component of a PRC1-like complex. As to expression, isoform 1 expression is stronger at the posterior border than in the anterior region within individual somites; On the contrary, isoform 2 expression is higher at the posterior border.

The protein localises to the nucleus. Functionally, component of a Polycomb group (PcG) multiprotein PRC1-like complex, a complex class required to maintain the transcriptionally repressive state of many genes, including Hox genes, throughout development. PcG PRC1 complex acts via chromatin remodeling and modification of histones; it mediates monoubiquitination of histone H2A 'Lys-119', rendering chromatin heritably changed in its expressibility. The protein is Polyhomeotic-like protein 2 (phc2) of Danio rerio (Zebrafish).